Reading from the N-terminus, the 465-residue chain is Dihydrolipoyl dehydrogenase (465 aa).

FAD is bound by residues 34 to 42, lysine 51, and glycine 114; that span reads EKREAGGTC. Cysteine 42 and cysteine 47 are disulfide-bonded. Residues 180 to 184, glutamate 203, valine 237, and 264 to 267 contribute to the NAD(+) site; these read GGGVI and SIGR. The FAD site is built by aspartate 307 and alanine 315. Histidine 439 acts as the Proton acceptor in catalysis.

Belongs to the class-I pyridine nucleotide-disulfide oxidoreductase family. Requires FAD as cofactor.

It is found in the cytoplasm. It carries out the reaction N(6)-[(R)-dihydrolipoyl]-L-lysyl-[protein] + NAD(+) = N(6)-[(R)-lipoyl]-L-lysyl-[protein] + NADH + H(+). Its function is as follows. The branched-chain alpha-keto dehydrogenase complex catalyzes the overall conversion of alpha-keto acids to acyl-CoA and CO(2). It contains multiple copies of 3 enzymatic components: branched-chain alpha-keto acid decarboxylase (E1), lipoamide acyltransferase (E2) and lipoamide dehydrogenase (E3). This is Dihydrolipoyl dehydrogenase (lpdA) from Chlamydia trachomatis serovar D (strain ATCC VR-885 / DSM 19411 / UW-3/Cx).